The following is a 301-amino-acid chain: GTPase Era (301 aa).

The 170-residue stretch at 11 to 180 (RSGIITLVGR…KDVFFENCLN (170 aa)) folds into the Era-type G domain. Residues 19–26 (GRPNVGKS) form a G1 region. 19 to 26 (GRPNVGKS) serves as a coordination point for GTP. Residues 45 to 49 (QTTRR) form a G2 region. Residues 66–69 (DTPG) are G3. GTP-binding positions include 66–70 (DTPGI) and 129–132 (TKID). Residues 129–132 (TKID) form a G4 region. The segment at 159 to 161 (VSA) is G5. The region spanning 210-286 (LEQEIPHSLL…YLRLIVKVVK (77 aa)) is the KH type-2 domain.

The protein belongs to the TRAFAC class TrmE-Era-EngA-EngB-Septin-like GTPase superfamily. Era GTPase family. In terms of assembly, monomer.

It localises to the cytoplasm. The protein resides in the cell membrane. Its function is as follows. An essential GTPase that binds both GDP and GTP, with rapid nucleotide exchange. Plays a role in 16S rRNA processing and 30S ribosomal subunit biogenesis and possibly also in cell cycle regulation and energy metabolism. This is GTPase Era from Tropheryma whipplei (strain TW08/27) (Whipple's bacillus).